We begin with the raw amino-acid sequence, 327 residues long: Sphingomyelinase D (327 aa).

The N-terminal stretch at 1–23 (MQPLTRTICALFCLLLTLPLTFG) is a signal peptide. The active site involves H52. Mg(2+) contacts are provided by E72, D74, and D117. Positions 320 to 327 (VTGADKLW) match the SMD-tail motif.

It belongs to the sphingomyelinase D/phospholipase D family. The cofactor is Mg(2+).

The protein resides in the secreted. The catalysed reaction is a sphingomyelin + H2O = an N-acylsphing-4-enine 1-phosphate + choline + H(+). Its function is as follows. Catalyzes the hydrolysis of sphingomyelin. Sphingomyelinases D are produced by some spider in their venoms, but also by arthropods such as ticks, or pathogenic bacteria and fungi. They might play a role in pathogenicity through different mechanisms, such as membrane destabilization and host cell penetration, but also pulmonary inflammation and cutaneous lesions. This Paracoccidioides brasiliensis (strain Pb03) protein is Sphingomyelinase D.